The following is a 279-amino-acid chain: 4-hydroxy-3-methylbut-2-enyl diphosphate reductase (279 aa).

Position 12 (Cys12) interacts with [4Fe-4S] cluster. Residues His40 and His72 each contribute to the (2E)-4-hydroxy-3-methylbut-2-enyl diphosphate site. Residues His40 and His72 each coordinate dimethylallyl diphosphate. Residues His40 and His72 each coordinate isopentenyl diphosphate. A [4Fe-4S] cluster-binding site is contributed by Cys94. Position 122 (His122) interacts with (2E)-4-hydroxy-3-methylbut-2-enyl diphosphate. Dimethylallyl diphosphate is bound at residue His122. His122 serves as a coordination point for isopentenyl diphosphate. The active-site Proton donor is the Glu124. Thr161 is a (2E)-4-hydroxy-3-methylbut-2-enyl diphosphate binding site. [4Fe-4S] cluster is bound at residue Cys189. (2E)-4-hydroxy-3-methylbut-2-enyl diphosphate is bound by residues Ser217, Asn219, and Ser261. Dimethylallyl diphosphate contacts are provided by Ser217, Asn219, and Ser261. Positions 217, 219, and 261 each coordinate isopentenyl diphosphate.

Belongs to the IspH family. [4Fe-4S] cluster serves as cofactor.

The catalysed reaction is isopentenyl diphosphate + 2 oxidized [2Fe-2S]-[ferredoxin] + H2O = (2E)-4-hydroxy-3-methylbut-2-enyl diphosphate + 2 reduced [2Fe-2S]-[ferredoxin] + 2 H(+). It catalyses the reaction dimethylallyl diphosphate + 2 oxidized [2Fe-2S]-[ferredoxin] + H2O = (2E)-4-hydroxy-3-methylbut-2-enyl diphosphate + 2 reduced [2Fe-2S]-[ferredoxin] + 2 H(+). It functions in the pathway isoprenoid biosynthesis; dimethylallyl diphosphate biosynthesis; dimethylallyl diphosphate from (2E)-4-hydroxy-3-methylbutenyl diphosphate: step 1/1. The protein operates within isoprenoid biosynthesis; isopentenyl diphosphate biosynthesis via DXP pathway; isopentenyl diphosphate from 1-deoxy-D-xylulose 5-phosphate: step 6/6. Catalyzes the conversion of 1-hydroxy-2-methyl-2-(E)-butenyl 4-diphosphate (HMBPP) into a mixture of isopentenyl diphosphate (IPP) and dimethylallyl diphosphate (DMAPP). Acts in the terminal step of the DOXP/MEP pathway for isoprenoid precursor biosynthesis. The sequence is that of 4-hydroxy-3-methylbut-2-enyl diphosphate reductase from Syntrophotalea carbinolica (strain DSM 2380 / NBRC 103641 / GraBd1) (Pelobacter carbinolicus).